We begin with the raw amino-acid sequence, 96 residues long: Accessory cholera enterotoxin (96 aa).

The helical transmembrane segment at 76–96 (QALAIVLQALMTRFALRALNL) threads the bilayer.

It is found in the secreted. It localises to the host cell membrane. Its function is as follows. Increases short-circuit current in rabbit ileal tissue mounted in Ussing chambers, by increasing the potential difference. Cultures of V.cholerae containing the cloned ace gene cause fluid secretion in ligated rabbit ileal loops. In Vibrio cholerae serotype O1 (strain ATCC 39315 / El Tor Inaba N16961), this protein is Accessory cholera enterotoxin (ace).